Here is a 216-residue protein sequence, read N- to C-terminus: Imidazole glycerol phosphate synthase subunit HisH (216 aa).

The Glutamine amidotransferase type-1 domain occupies 2 to 216 (RVAIIDYGSG…LIANFLKWKP (215 aa)). Catalysis depends on Cys-88, which acts as the Nucleophile. Catalysis depends on residues His-196 and Glu-198.

Heterodimer of HisH and HisF.

It localises to the cytoplasm. The catalysed reaction is 5-[(5-phospho-1-deoxy-D-ribulos-1-ylimino)methylamino]-1-(5-phospho-beta-D-ribosyl)imidazole-4-carboxamide + L-glutamine = D-erythro-1-(imidazol-4-yl)glycerol 3-phosphate + 5-amino-1-(5-phospho-beta-D-ribosyl)imidazole-4-carboxamide + L-glutamate + H(+). The enzyme catalyses L-glutamine + H2O = L-glutamate + NH4(+). The protein operates within amino-acid biosynthesis; L-histidine biosynthesis; L-histidine from 5-phospho-alpha-D-ribose 1-diphosphate: step 5/9. Its function is as follows. IGPS catalyzes the conversion of PRFAR and glutamine to IGP, AICAR and glutamate. The HisH subunit catalyzes the hydrolysis of glutamine to glutamate and ammonia as part of the synthesis of IGP and AICAR. The resulting ammonia molecule is channeled to the active site of HisF. The protein is Imidazole glycerol phosphate synthase subunit HisH of Brucella abortus biovar 1 (strain 9-941).